Consider the following 176-residue polypeptide: Large ribosomal subunit protein uL6 (176 aa).

It belongs to the universal ribosomal protein uL6 family. In terms of assembly, part of the 50S ribosomal subunit.

Its function is as follows. This protein binds to the 23S rRNA, and is important in its secondary structure. It is located near the subunit interface in the base of the L7/L12 stalk, and near the tRNA binding site of the peptidyltransferase center. In Lactobacillus gasseri (strain ATCC 33323 / DSM 20243 / BCRC 14619 / CIP 102991 / JCM 1131 / KCTC 3163 / NCIMB 11718 / NCTC 13722 / AM63), this protein is Large ribosomal subunit protein uL6.